The primary structure comprises 1008 residues: Collagen alpha-2(I) chain (1008 aa).

The interval 1–999 (GGFDFSFLPQ…IRGSGGGYDF (999 aa)) is disordered. Pro-9, Pro-12, Pro-45, and Pro-51 each carry 4-hydroxyproline. The span at 38–81 (LMGPRGPPGASGAPGPQGFPAGEPGEPGQTGPAGARGPAGPPGK) shows a compositional bias: low complexity. The span at 82–94 (ADGHPGKPGRPGE) shows a compositional bias: basic and acidic residues. Position 116 is a 5-hydroxylysine; alternate (Lys-116). The O-linked (Gal...) hydroxylysine; alternate glycan is linked to Lys-116. 3 stretches are compositionally biased toward low complexity: residues 164-193 (VGAPGPAGARGSDGSVGPVGPAGPIGSAGP), 239-260 (PGANGLTGAKGAAGLPGVAGAP), and 301-314 (EPGSAGPQGPPGSS). Gly residues predominate over residues 336 to 345 (GLRGGPGSRG). Residues 358–374 (PAGARGASGPAGVRGPS) are compositionally biased toward low complexity. Pro-380 and Pro-383 each carry 4-hydroxyproline. The span at 409 to 428 (LPGIDGRPGPIGPAGARGEA) shows a compositional bias: low complexity. Over residues 455–466 (GNRGQGGKGEQG) the composition is skewed to gly residues. Composition is skewed to low complexity over residues 513–530 (PGESGAVGPSGAIGSRGP) and 542–552 (EPGVVGAPGTA). A compositionally biased stretch (gly residues) spans 553–562 (GPAGSGGLPG). 2 stretches are compositionally biased toward low complexity: residues 582 to 629 (RGEV…PRGS) and 636 to 656 (VGPAGPNGFAGPAGAAGQPGA). Positions 657-666 (KGERGTKGPK) are enriched in basic and acidic residues. Low complexity predominate over residues 674-684 (PTGPVGSAGPA). The span at 694 to 703 (GSRGDGGPPG) shows a compositional bias: gly residues. A compositionally biased stretch (low complexity) spans 704-714 (ATGFPGAAGRT). Positions 751–760 (GETGAGGPPG) are enriched in gly residues. Composition is skewed to low complexity over residues 768–795 (SGEPGTAGPPGTAGPQGLLGAPGILGLP), 803–813 (LPGVAGAVGEP), 826–842 (PPGAVGSPGVNGAPGNP), 862–884 (YAGNAGPVGAAGAPGPHGTVGPA), and 892–907 (EPGPVGSVGPVGALGP). Over residues 917 to 928 (RGDKGEPGDKGP) the composition is skewed to basic and acidic residues. Positions 989-998 (GIRGSGGGYD) are enriched in gly residues.

Belongs to the fibrillar collagen family. In terms of assembly, trimers of one alpha 2(I) and two alpha 1(I) chains. Interacts (via C-terminus) with TMEM131 (via PapD-L domain); the interaction is direct and is involved in assembly and TRAPPIII ER-to-Golgi transport complex-dependent secretion of collagen. Prolines at the third position of the tripeptide repeating unit (G-X-Y) are hydroxylated in some or all of the chains. As to expression, expressed in bones.

It localises to the secreted. Its subcellular location is the extracellular space. It is found in the extracellular matrix. Type I collagen is a member of group I collagen (fibrillar forming collagen). This is Collagen alpha-2(I) chain from Nothrotheriops shastensis (Shasta ground sloth).